The chain runs to 173 residues: ATP synthase subunit beta, mitochondrial (173 aa).

The protein belongs to the ATPase alpha/beta chains family. As to quaternary structure, F-type ATPases have 2 components, CF(1) - the catalytic core - and CF(0) - the membrane proton channel. CF(1) has five subunits: alpha(3), beta(3), gamma(1), delta(1), epsilon(1). CF(0) has three main subunits: a, b and c.

It localises to the mitochondrion. Its subcellular location is the mitochondrion inner membrane. It carries out the reaction ATP + H2O + 4 H(+)(in) = ADP + phosphate + 5 H(+)(out). In terms of biological role, mitochondrial membrane ATP synthase (F(1)F(0) ATP synthase or Complex V) produces ATP from ADP in the presence of a proton gradient across the membrane which is generated by electron transport complexes of the respiratory chain. F-type ATPases consist of two structural domains, F(1) - containing the extramembraneous catalytic core and F(0) - containing the membrane proton channel, linked together by a central stalk and a peripheral stalk. During catalysis, ATP synthesis in the catalytic domain of F(1) is coupled via a rotary mechanism of the central stalk subunits to proton translocation. Subunits alpha and beta form the catalytic core in F(1). Rotation of the central stalk against the surrounding alpha(3)beta(3) subunits leads to hydrolysis of ATP in three separate catalytic sites on the beta subunits. The sequence is that of ATP synthase subunit beta, mitochondrial (ATPB) from Actinidia deliciosa (Kiwi).